Here is a 316-residue protein sequence, read N- to C-terminus: Sorting nexin-20 (316 aa).

Residues Met-1–Thr-57 form a disordered region. Ser-3 carries the post-translational modification Phosphoserine. Polar residues predominate over residues Gly-47–Thr-57. The PX domain occupies Val-74 to Glu-191. Positions 116, 118, 143, and 157 each coordinate a 1,2-diacyl-sn-glycero-3-phospho-(1D-myo-inositol-3-phosphate).

It belongs to the sorting nexin family. As to quaternary structure, interacts with SELPLG. Interaction with SELPLG is controversial.

The protein localises to the early endosome membrane. The protein resides in the cell membrane. Its subcellular location is the cytoplasm. It is found in the nucleus. In terms of biological role, may play a role in cellular vesicle trafficking. Has been proposed to function as a sorting protein that targets SELPLG into endosomes, but has no effect on SELPLG internalization from the cell surface, or on SELPLG-mediated cell-cell adhesion. The polypeptide is Sorting nexin-20 (SNX20) (Bos taurus (Bovine)).